Consider the following 1464-residue polypeptide: Nuclear pore complex protein NUP155 (1464 aa).

S2 is modified (N-acetylserine).

The protein belongs to the non-repetitive/WGA-negative nucleoporin family. In terms of assembly, part of the nuclear pore complex (NPC). The NPC has an eight-fold symmetrical structure comprising a central transport channel and two rings, the cytoplasmic and nuclear rings, to which eight filaments are attached. The cytoplasmic filaments have loose ends, while the nuclear filaments are joined in a distal ring, forming a nuclear basket. NPCs are highly dynamic in configuration and composition, and can be devided in 3 subcomplexes, the NUP62 subcomplex, the NUP107-160 subcomplex and the NUP93 subcomplex, containing approximately 30 different nucleoporin proteins.

It localises to the nucleus. It is found in the nuclear pore complex. In terms of biological role, major component of the nuclear pore complex (NPC). The protein is Nuclear pore complex protein NUP155 of Arabidopsis thaliana (Mouse-ear cress).